The chain runs to 391 residues: DNA repair protein NreB (391 aa).

A C4-type zinc finger spans residues 3 to 17; that stretch reads CIECRGRMLCSRKVC. Residues 384–391 carry the PIP motif motif; that stretch reads QRTLWEFM.

This sequence belongs to the Nre family. Interacts with the DNA polymerase sliding clamp (PCNA) via the PIP (PCNA-interacting peptide) motif.

Functionally, involved in DNA damage repair. This is DNA repair protein NreB from Archaeoglobus fulgidus (strain ATCC 49558 / DSM 4304 / JCM 9628 / NBRC 100126 / VC-16).